The sequence spans 339 residues: Methylglutaconyl-CoA hydratase, mitochondrial (339 aa).

Residues 1–67 (MAAAVAAAPG…AGGPAPKRGY (67 aa)) constitute a mitochondrion transit peptide. N6-acetyllysine; alternate is present on Lys100. Lys100 is modified (N6-succinyllysine; alternate). The tract at residues 105–119 (KNLIKMLSKAVDALK) is RNA-binding. The residue at position 109 (Lys109) is an N6-succinyllysine. 2 positions are modified to N6-acetyllysine; alternate: Lys113 and Lys144. 2 positions are modified to N6-succinyllysine; alternate: Lys113 and Lys144. 2 positions are modified to N6-succinyllysine: Lys148 and Lys160. An N6-acetyllysine; alternate mark is found at Lys204 and Lys211. Lys204 and Lys211 each carry N6-succinyllysine; alternate. Residue Lys329 is modified to N6-succinyllysine.

Belongs to the enoyl-CoA hydratase/isomerase family. Homohexamer.

It localises to the mitochondrion. The enzyme catalyses (3S)-3-hydroxy-3-methylglutaryl-CoA = 3-methyl-(2E)-glutaconyl-CoA + H2O. It carries out the reaction (3S)-citramalyl-CoA = itaconyl-CoA + H2O. It catalyses the reaction 3-hydroxyisovaleryl-CoA = 3-methylbut-2-enoyl-CoA + H2O. The catalysed reaction is (S)-3-hydroxyglutaryl-CoA = (2E)-glutaconyl-CoA + H2O. It functions in the pathway amino-acid degradation; L-leucine degradation; (S)-3-hydroxy-3-methylglutaryl-CoA from 3-isovaleryl-CoA: step 3/3. Functionally, catalyzes the fifth step in the leucine degradation pathway, the reversible hydration of 3-methylglutaconyl-CoA (3-MG-CoA) to 3-hydroxy-3-methylglutaryl-CoA (HMG-CoA). Can catalyze the reverse reaction but at a much lower rate in vitro. HMG-CoA is then quickly degraded by another enzyme (such as HMG-CoA lyase) to give acetyl-CoA and acetoacetate. Uses other substrates such as (2E)-glutaconyl-CoA efficiently in vitro, and to a lesser extent 3-methylcrotonyl-CoA (3-methyl-(2E)-butenoyl-CoA), crotonyl-CoA ((2E)-butenoyl-CoA) and 3-hydroxybutanoyl-CoA (the missing carboxylate reduces affinity to the active site). Originally it was identified as an RNA-binding protein as it binds to AU-rich elements (AREs) in vitro. AREs direct rapid RNA degradation and mRNA deadenylation. Might have itaconyl-CoA hydratase activity, converting itaconyl-CoA into citramalyl-CoA in the C5-dicarboxylate catabolism pathway. The C5-dicarboxylate catabolism pathway is required to detoxify itaconate, an antimicrobial metabolite and immunomodulator produced by macrophages during certain infections, that can act as a vitamin B12-poisoning metabolite. In Homo sapiens (Human), this protein is Methylglutaconyl-CoA hydratase, mitochondrial (AUH).